Consider the following 342-residue polypeptide: Bifunctional terpene synthase Agr4 (342 aa).

Aspartate 87, asparagine 222, serine 226, and glutamate 230 together coordinate Mg(2+). The DDXXD motif signature appears at 87–91 (DEVSD). Arginine 308 and tyrosine 309 together coordinate (2E,6E)-farnesyl diphosphate.

This sequence belongs to the terpene synthase family. Mg(2+) is required as a cofactor.

The catalysed reaction is (2E,6E)-farnesyl diphosphate = delta-cadinene + diphosphate. It catalyses the reaction (2E,6E)-farnesyl diphosphate = gamma-muurolene + diphosphate. It carries out the reaction (2E,6E)-farnesyl diphosphate = beta-copaene + diphosphate. The enzyme catalyses (2E)-geranyl diphosphate = beta-myrcene + diphosphate. In terms of biological role, terpene cyclase that catalyzes the cyclization of farnesyl diphosphate (FPP) to various sesquiterpenes, including beta-copaene, alpha-cubebene, cadina-1(6),4-diene, gamma-muurolene, delta-cadinene, epizonarene, epicubenol and cubenol. Agr4 is also able to use the monoterpene precursor geranyl diphosphate (GPP) as substrates to synthesize the monoterpene beta-myrcene. Delta-cadinene is the major product of Agr4. The sequence is that of Bifunctional terpene synthase Agr4 from Cyclocybe aegerita (Black poplar mushroom).